Here is a 576-residue protein sequence, read N- to C-terminus: V-type ATP synthase alpha chain (576 aa).

G238–T245 provides a ligand contact to ATP.

It belongs to the ATPase alpha/beta chains family.

The enzyme catalyses ATP + H2O + 4 H(+)(in) = ADP + phosphate + 5 H(+)(out). Produces ATP from ADP in the presence of a proton gradient across the membrane. The V-type alpha chain is a catalytic subunit. In Borrelia turicatae (strain 91E135), this protein is V-type ATP synthase alpha chain.